A 104-amino-acid chain; its full sequence is Nucleoid-associated protein Ccon26_18480 (104 aa).

The segment covering 16-34 (DVQKQAKQMEEESKNKEFG) has biased composition (basic and acidic residues). Positions 16–38 (DVQKQAKQMEEESKNKEFGAKSG) are disordered.

It belongs to the YbaB/EbfC family. Homodimer.

It localises to the cytoplasm. The protein localises to the nucleoid. Binds to DNA and alters its conformation. May be involved in regulation of gene expression, nucleoid organization and DNA protection. The polypeptide is Nucleoid-associated protein Ccon26_18480 (Campylobacter concisus (strain 13826)).